Here is a 1222-residue protein sequence, read N- to C-terminus: ATP-dependent helicase/nuclease subunit A (1222 aa).

A UvrD-like helicase ATP-binding domain is found at 39–495 (QKRTAQQIEA…ILLKENFRSQ (457 aa)). 60-67 (ASAGSGKT) serves as a coordination point for ATP. The 287-residue stretch at 524–810 (QLIAGSHAQT…NLMTIHKSKG (287 aa)) folds into the UvrD-like helicase C-terminal domain.

The protein belongs to the helicase family. AddA subfamily. In terms of assembly, heterodimer of AddA and AddB/RexB. Requires Mg(2+) as cofactor.

The catalysed reaction is Couples ATP hydrolysis with the unwinding of duplex DNA by translocating in the 3'-5' direction.. It carries out the reaction ATP + H2O = ADP + phosphate + H(+). Functionally, the heterodimer acts as both an ATP-dependent DNA helicase and an ATP-dependent, dual-direction single-stranded exonuclease. Recognizes the chi site generating a DNA molecule suitable for the initiation of homologous recombination. The AddA nuclease domain is required for chi fragment generation; this subunit has the helicase and 3' -&gt; 5' nuclease activities. The sequence is that of ATP-dependent helicase/nuclease subunit A from Streptococcus pyogenes serotype M6 (strain ATCC BAA-946 / MGAS10394).